The primary structure comprises 203 residues: ATP phosphoribosyltransferase (203 aa).

It belongs to the ATP phosphoribosyltransferase family. Short subfamily.

It is found in the cytoplasm. The enzyme catalyses 1-(5-phospho-beta-D-ribosyl)-ATP + diphosphate = 5-phospho-alpha-D-ribose 1-diphosphate + ATP. Its pathway is amino-acid biosynthesis; L-histidine biosynthesis; L-histidine from 5-phospho-alpha-D-ribose 1-diphosphate: step 1/9. Functionally, catalyzes the condensation of ATP and 5-phosphoribose 1-diphosphate to form N'-(5'-phosphoribosyl)-ATP (PR-ATP). Has a crucial role in the pathway because the rate of histidine biosynthesis seems to be controlled primarily by regulation of HisG enzymatic activity. This chain is ATP phosphoribosyltransferase, found in Thermococcus kodakarensis (strain ATCC BAA-918 / JCM 12380 / KOD1) (Pyrococcus kodakaraensis (strain KOD1)).